The primary structure comprises 248 residues: Large ribosomal subunit protein uL1 (248 aa).

Belongs to the universal ribosomal protein uL1 family. In terms of assembly, part of the 50S ribosomal subunit.

In terms of biological role, binds directly to 23S rRNA. The L1 stalk is quite mobile in the ribosome, and is involved in E site tRNA release. Functionally, protein L1 is also a translational repressor protein, it controls the translation of the L11 operon by binding to its mRNA. The sequence is that of Large ribosomal subunit protein uL1 from Orientia tsutsugamushi (strain Boryong) (Rickettsia tsutsugamushi).